Reading from the N-terminus, the 471-residue chain is Adenosylhomocysteinase (471 aa).

Substrate-binding residues include Thr-60, Asp-135, and Glu-196. 197–199 (TTT) is a binding site for NAD(+). Substrate-binding residues include Lys-226 and Asp-230. NAD(+)-binding positions include Asn-231, 260-265 (GYGDVG), Glu-283, Asn-318, 339-341 (IGH), and Asn-387.

This sequence belongs to the adenosylhomocysteinase family. It depends on NAD(+) as a cofactor.

The protein resides in the cytoplasm. The enzyme catalyses S-adenosyl-L-homocysteine + H2O = L-homocysteine + adenosine. Its pathway is amino-acid biosynthesis; L-homocysteine biosynthesis; L-homocysteine from S-adenosyl-L-homocysteine: step 1/1. Its function is as follows. May play a key role in the regulation of the intracellular concentration of adenosylhomocysteine. This Chlorobium phaeovibrioides (strain DSM 265 / 1930) (Prosthecochloris vibrioformis (strain DSM 265)) protein is Adenosylhomocysteinase.